Reading from the N-terminus, the 360-residue chain is Peptide chain release factor 1 (360 aa).

An N5-methylglutamine modification is found at Q237.

This sequence belongs to the prokaryotic/mitochondrial release factor family. Post-translationally, methylated by PrmC. Methylation increases the termination efficiency of RF1.

Its subcellular location is the cytoplasm. In terms of biological role, peptide chain release factor 1 directs the termination of translation in response to the peptide chain termination codons UAG and UAA. The sequence is that of Peptide chain release factor 1 from Pseudomonas syringae pv. tomato (strain ATCC BAA-871 / DC3000).